A 376-amino-acid polypeptide reads, in one-letter code: N-acetyldiaminopimelate deacetylase (376 aa).

Residue Asp-69 is part of the active site. The active-site Proton acceptor is the Glu-128.

The protein belongs to the peptidase M20A family. N-acetyldiaminopimelate deacetylase subfamily.

It carries out the reaction N-acetyl-(2S,6S)-2,6-diaminopimelate + H2O = (2S,6S)-2,6-diaminopimelate + acetate. Its pathway is amino-acid biosynthesis; L-lysine biosynthesis via DAP pathway; LL-2,6-diaminopimelate from (S)-tetrahydrodipicolinate (acetylase route): step 3/3. Its function is as follows. Catalyzes the conversion of N-acetyl-diaminopimelate to diaminopimelate and acetate. In Streptococcus pneumoniae (strain Taiwan19F-14), this protein is N-acetyldiaminopimelate deacetylase.